The chain runs to 350 residues: Delta(6)-protoilludene synthase STEHIDRAFT_64702 (350 aa).

Mg(2+) is bound by residues aspartate 89, asparagine 225, serine 229, and glutamate 233. The D(D/E)XX(D/E) motif motif lies at 89–93 (DEHSD). The NSE motif signature appears at 225–233 (NDIVSYNIE). (2E,6E)-farnesyl diphosphate contacts are provided by arginine 314 and tyrosine 315.

It belongs to the terpene synthase family. It depends on Mg(2+) as a cofactor. Mn(2+) is required as a cofactor. Requires Ca(2+) as cofactor. Ni(2+) serves as cofactor. The cofactor is Co(2+).

The catalysed reaction is (2E,6E)-farnesyl diphosphate = Delta(6)-protoilludene + diphosphate. It carries out the reaction (2E,6E)-farnesyl diphosphate = alpha-selinene + diphosphate. With respect to regulation, ca(2+) switches the cyclization mechanism of delta(6)-protoilludene synthase from 1,11 to 1,10 cyclization which leads to the production of beta-elemene. Its function is as follows. Terpene cyclase that catalyzes the cyclization of farnesyl diphosphate (FPP) to delta(6)-protoilludene. In presence of Ca(2+), a significant switch from 1,11 to a dual 1,11/1,10 cyclization occurs, producing beta-elemene as the major product, with lower levels of delta(6)-protoilludene and (E)-beta-caryophyllene, and traces of beta-selinene and alpha-selinene. The protein is Delta(6)-protoilludene synthase STEHIDRAFT_64702 of Stereum hirsutum (strain FP-91666) (White-rot fungus).